We begin with the raw amino-acid sequence, 2022 residues long: Transient receptor potential cation channel subfamily M member 6 (2022 aa).

Residues Met-1–Lys-741 lie on the Cytoplasmic side of the membrane. Residues Asn-742–Phe-762 form a helical membrane-spanning segment. At Lys-763 to Lys-841 the chain is on the extracellular side. A helical transmembrane segment spans residues Phe-842 to Val-862. At Glu-863–Trp-905 the chain is on the cytoplasmic side. Residues Ile-906 to Val-926 form a helical membrane-spanning segment. Residues Leu-927–Arg-939 lie on the Extracellular side of the membrane. The helical transmembrane segment at Leu-940–Asn-960 threads the bilayer. Residues Gln-961–Lys-972 lie on the Cytoplasmic side of the membrane. Residues Met-973 to Val-993 traverse the membrane as a helical segment. The Extracellular portion of the chain corresponds to Ala-994 to Asp-1012. The pore-forming intramembrane region spans Ile-1013–Cys-1033. At Ser-1034–Pro-1047 the chain is on the extracellular side. Residues Phe-1048 to Phe-1068 form a helical membrane-spanning segment. At Phe-1069–Leu-2022 the chain is on the cytoplasmic side. Positions Thr-1479–Gly-1516 are disordered. The span at Asp-1483–Gln-1493 shows a compositional bias: basic and acidic residues. A compositionally biased stretch (polar residues) spans Ala-1494–Cys-1512. The region spanning Asn-1750 to Leu-1980 is the Alpha-type protein kinase domain. Gly-1777, Gly-1778, Leu-1779, Arg-1780, and Lys-1804 together coordinate ADP. Position 1851 is a phosphothreonine; by autocatalysis (Thr-1851). 2 residues coordinate ADP: Glu-1876 and Met-1879. His-1909 is a binding site for Zn(2+). The active-site Proton acceptor is the Asp-1923. Asp-1933 serves as a coordination point for ADP. Residues His-1966, Cys-1968, and Cys-1972 each coordinate Zn(2+). Positions Glu-1997–Leu-2022 are disordered. Basic and acidic residues predominate over residues Ile-1998 to Pro-2016.

In the C-terminal section; belongs to the protein kinase superfamily. Alpha-type protein kinase family. ALPK subfamily. The protein in the N-terminal section; belongs to the transient receptor (TC 1.A.4) family. LTrpC subfamily. TRPM6 sub-subfamily. Homomers. Forms heteromers with TRPM7; TRPM6 increases the current amplitude of TRPM6/7 heteromers as compared to TRPM7 homomer. Interacts (via kinase domain) with RACK1. Autophosphorylated; autophosphorylation controlls the protein kinase activity of TRPM6 towards their substrates. Autophosphorylation of Thr-1851 in the kinase domain is essential for the inhibitory effect of RACK1. Post-translationally, the C-terminus of TRPM6 is proteolytically cleaved in vivo, in a cell type-specific fashion, releasing the kinase module from the transmembrane domain. The cleaved kinase fragments are translocated to the nucleus to phosphorylate histones and regulate gene expression. As to expression, highly expressed in kidney and colon. Isoform TRPM6a and isoform TRPM6b, are coexpressed with TRPM7 in kidney, and testis, and are also found in several cell lines of lung origin. Isoform TRPM6c is detected only in testis and in NCI-H510A small cell lung carcinoma cells.

It is found in the cell membrane. It localises to the apical cell membrane. The protein localises to the nucleus. It carries out the reaction L-seryl-[protein] + ATP = O-phospho-L-seryl-[protein] + ADP + H(+). The catalysed reaction is L-threonyl-[protein] + ATP = O-phospho-L-threonyl-[protein] + ADP + H(+). It catalyses the reaction Mg(2+)(in) = Mg(2+)(out). The enzyme catalyses Ca(2+)(in) = Ca(2+)(out). It carries out the reaction Zn(2+)(in) = Zn(2+)(out). With respect to regulation, strongly inhibited by intracellular Mg(2+); unlikely to be active at physiological levels of intracellular Mg(2+). In the heteromeric TRPM6-TRPM7 channels complexes, TRPM7 are able to offset the very high sensitivity of TRPM6 to cytosolic Mg(2+) to physiologically relevant concentrations, whereas TRPM6 relieve TRPM7 from the inhibitory action of Mg-ATP. Consequently, the association of TRPM6 with TRPM7 allow for high constitutive activity of TRPM6/7 in the presence of physiological levels of Mg(2+) and Mg-ATP. The kinase activity is controlled through the autophosphorylation of a serine/threonine-rich region located to the N-terminal of the catalytic domain. Bifunctional protein that combines an ion channel with an intrinsic kinase domain, enabling it to modulate cellular functions either by conducting ions through the pore or by phosphorylating downstream proteins via its kinase domain. Crucial for Mg(2+) homeostasis. Has an important role in epithelial Mg(2+) transport and in the active Mg(2+) absorption in the gut and kidney. However, whether TRPM6 forms functional homomeric channels by itself or functions primarily as a subunit of heteromeric TRPM6-TRPM7 channels, is still under debate. Its function is as follows. The C-terminal kinase domain can be cleaved from the channel segment in a cell-type-specific fashion. The cleaved kinase fragments can translocate to the nucleus, and bind chromatin-remodeling complex proteins to ultimately phosphorylate specific Ser/Thr residues of histones known to be functionally important for cell differentiation and development. In Homo sapiens (Human), this protein is Transient receptor potential cation channel subfamily M member 6 (TRPM6).